The chain runs to 134 residues: ATP synthase epsilon chain, chloroplastic (134 aa).

This sequence belongs to the ATPase epsilon chain family. F-type ATPases have 2 components, CF(1) - the catalytic core - and CF(0) - the membrane proton channel. CF(1) has five subunits: alpha(3), beta(3), gamma(1), delta(1), epsilon(1). CF(0) has three main subunits: a, b and c.

It localises to the plastid. Its subcellular location is the chloroplast thylakoid membrane. Produces ATP from ADP in the presence of a proton gradient across the membrane. The polypeptide is ATP synthase epsilon chain, chloroplastic (Gracilaria tenuistipitata var. liui (Red alga)).